Reading from the N-terminus, the 74-residue chain is ATP synthase subunit c (74 aa).

2 consecutive transmembrane segments (helical) span residues 8–28 (FIGIGFMAIGMYGAALGVSNI) and 52–72 (IGAGLAEAMGLFSFVIAMLLI).

It belongs to the ATPase C chain family. As to quaternary structure, F-type ATPases have 2 components, F(1) - the catalytic core - and F(0) - the membrane proton channel. F(1) has five subunits: alpha(3), beta(3), gamma(1), delta(1), epsilon(1). F(0) has three main subunits: a(1), b(2) and c(10-14). The alpha and beta chains form an alternating ring which encloses part of the gamma chain. F(1) is attached to F(0) by a central stalk formed by the gamma and epsilon chains, while a peripheral stalk is formed by the delta and b chains.

It is found in the cell inner membrane. F(1)F(0) ATP synthase produces ATP from ADP in the presence of a proton or sodium gradient. F-type ATPases consist of two structural domains, F(1) containing the extramembraneous catalytic core and F(0) containing the membrane proton channel, linked together by a central stalk and a peripheral stalk. During catalysis, ATP synthesis in the catalytic domain of F(1) is coupled via a rotary mechanism of the central stalk subunits to proton translocation. In terms of biological role, key component of the F(0) channel; it plays a direct role in translocation across the membrane. A homomeric c-ring of between 10-14 subunits forms the central stalk rotor element with the F(1) delta and epsilon subunits. This is ATP synthase subunit c from Rickettsia prowazekii (strain Madrid E).